Here is a 33-residue protein sequence, read N- to C-terminus: Beta-amanitin proprotein (33 aa).

The propeptide occupies 1 to 10 (MSDINATRLP). A cross-link (cyclopeptide (Ile-Pro)) is located at residues 11–18 (IWGIGCDP). Positions 12–16 (WGIGC) form a cross-link, 2'-cysteinyl-6'-hydroxytryptophan sulfoxide (Trp-Cys). Positions 19-33 (CVGDEVTALLTRGEA) are excised as a propeptide.

The protein belongs to the MSDIN fungal toxin family. In terms of processing, processed by the macrocyclase-peptidase enzyme POPB to yield a toxic cyclic decapeptide. POPB first removes 10 residues from the N-terminus. Conformational trapping of the remaining peptide forces the enzyme to release this intermediate rather than proceed to macrocyclization. The enzyme rebinds the remaining peptide in a different conformation and catalyzes macrocyclization of the N-terminal 8 residues.

Toxin belonging to the bicyclic octapeptides amatoxins that acts by binding non-competitively to RNA polymerase II and greatly slowing the elongation of transcripts from target promoters. This chain is Beta-amanitin proprotein, found in Amanita fuligineoides.